Consider the following 278-residue polypeptide: Pantothenate synthetase (278 aa).

26–33 provides a ligand contact to ATP; it reads MGNLHEGH. His33 acts as the Proton donor in catalysis. Residue Gln57 coordinates (R)-pantoate. Gln57 is a binding site for beta-alanine. ATP is bound at residue 144–147; it reads GKKD. Gln150 contacts (R)-pantoate. Residues Gly173 and 181 to 184 contribute to the ATP site; that span reads LSSR.

It belongs to the pantothenate synthetase family. Homodimer.

It localises to the cytoplasm. It catalyses the reaction (R)-pantoate + beta-alanine + ATP = (R)-pantothenate + AMP + diphosphate + H(+). Its pathway is cofactor biosynthesis; (R)-pantothenate biosynthesis; (R)-pantothenate from (R)-pantoate and beta-alanine: step 1/1. Its function is as follows. Catalyzes the condensation of pantoate with beta-alanine in an ATP-dependent reaction via a pantoyl-adenylate intermediate. This chain is Pantothenate synthetase, found in Neisseria meningitidis serogroup A / serotype 4A (strain DSM 15465 / Z2491).